The chain runs to 113 residues: Hydrogenase maturation factor HypA (113 aa).

His2 lines the Ni(2+) pocket. Positions 73, 76, 89, and 92 each coordinate Zn(2+).

It belongs to the HypA/HybF family.

In terms of biological role, involved in the maturation of [NiFe] hydrogenases. Required for nickel insertion into the metal center of the hydrogenase. This chain is Hydrogenase maturation factor HypA, found in Azorhizobium caulinodans (strain ATCC 43989 / DSM 5975 / JCM 20966 / LMG 6465 / NBRC 14845 / NCIMB 13405 / ORS 571).